The sequence spans 523 residues: Mitochondrial distribution and morphology protein 34 (523 aa).

Residues 1 to 200 (MSFKVNWKSL…LPTLIHQFSL (200 aa)) form the SMP-LTD domain. The disordered stretch occupies residues 489 to 523 (ELSMDRSGKRKQRNYGSATYESENPIVAPPPPYSH).

It belongs to the MDM34 family. In terms of assembly, component of the ER-mitochondria encounter structure (ERMES) or MDM complex, composed of MMM1, MDM10, MDM12 and MDM34.

Its subcellular location is the mitochondrion outer membrane. In terms of biological role, component of the ERMES/MDM complex, which serves as a molecular tether to connect the endoplasmic reticulum (ER) and mitochondria. Components of this complex are involved in the control of mitochondrial shape and protein biogenesis, and function in nonvesicular lipid trafficking between the ER and mitochondria. MDM34 is required for the interaction of the ER-resident membrane protein MMM1 and the outer mitochondrial membrane-resident beta-barrel protein MDM10. In Scheffersomyces stipitis (strain ATCC 58785 / CBS 6054 / NBRC 10063 / NRRL Y-11545) (Yeast), this protein is Mitochondrial distribution and morphology protein 34.